A 639-amino-acid chain; its full sequence is MGKIIGIDLGTTNSCVAVLDGGKARVLENAEGDRTTPSIIAYTDDETIVGQPAKRQAVTNPNNTFFAIKRLIGRRFKDDEVQRDVNIMPFKIIQADNGDAWVESRGNKMAPPQVSAEILKKMKKTAEDFLGEEVTEAVITVPAYFNDSQRQATKDAGRIAGLEVKRIINEPTAAALAYGIDKKQGDNIVAVYDLGGGTFDISIIEIDSNDGDQTFEVLATNGDTHLGGEDFDNRLINYLADEFKKEQGLDLRKDPLAMQRLKEAAEKAKIELSSTNQTEVNLPYITADATGPKHLVVKITRAKLESLVEDLIIRTLEPLKVALADADLSVSDINEVILVGGQTRMPKVQEAVTNFFGKEPRKDVNPDEAVAVGAAIQAGVLSGDVKDVLLLDVTPLSLGIETMGSVMTKLIEKNTTIPTKAQQVFSTADDNQSAVTIHVLQGERKQASANKSLGQFNLDGIEPAPRGMPQIEVMFDIDADGILHVSATDKKTGKKQNITIKASSGLSEEEVAQMVRDAEAHAEEDKKFEELVQSRNQADGLVHATKKQVEEAGDALPADDKAKIEAAMSAVEVATKGNDKEAIEKATQELIEASAKLMEIAQAKAQTQGGAQEGAAKQSNATADDVVDAEFEEVKDDKK.

A Phosphothreonine; by autocatalysis modification is found at threonine 198. Low complexity predominate over residues 603–618 (AKAQTQGGAQEGAAKQ). Positions 603–639 (AKAQTQGGAQEGAAKQSNATADDVVDAEFEEVKDDKK) are disordered. Residues 625–639 (DVVDAEFEEVKDDKK) show a composition bias toward acidic residues.

The protein belongs to the heat shock protein 70 family.

Functionally, acts as a chaperone. The protein is Chaperone protein DnaK of Shewanella sp. (strain MR-4).